Reading from the N-terminus, the 313-residue chain is Probable cell division protein WhiA (313 aa).

Positions 277 to 311 form a DNA-binding region, H-T-H motif; the sequence is SLKEVAAQVPDGPISKSGVNHRFQKIREIAKQLKE.

It belongs to the WhiA family.

Functionally, involved in cell division and chromosome segregation. This Lactobacillus johnsonii (strain CNCM I-12250 / La1 / NCC 533) protein is Probable cell division protein WhiA.